Consider the following 185-residue polypeptide: Peptide deformylase (185 aa).

Residues cysteine 109 and histidine 152 each coordinate Fe cation. Glutamate 153 is an active-site residue. Histidine 156 serves as a coordination point for Fe cation.

The protein belongs to the polypeptide deformylase family. Fe(2+) serves as cofactor.

It catalyses the reaction N-terminal N-formyl-L-methionyl-[peptide] + H2O = N-terminal L-methionyl-[peptide] + formate. Its function is as follows. Removes the formyl group from the N-terminal Met of newly synthesized proteins. Requires at least a dipeptide for an efficient rate of reaction. N-terminal L-methionine is a prerequisite for activity but the enzyme has broad specificity at other positions. The chain is Peptide deformylase from Roseiflexus castenholzii (strain DSM 13941 / HLO8).